The chain runs to 497 residues: Cobyric acid synthase (497 aa).

The GATase cobBQ-type domain occupies 257 to 431 (WLRVAAVRLP…WHGLLDNDDF (175 aa)). The active-site Nucleophile is the cysteine 338. The active site involves histidine 423.

The protein belongs to the CobB/CobQ family. CobQ subfamily.

It participates in cofactor biosynthesis; adenosylcobalamin biosynthesis. Its function is as follows. Catalyzes amidations at positions B, D, E, and G on adenosylcobyrinic A,C-diamide. NH(2) groups are provided by glutamine, and one molecule of ATP is hydrogenolyzed for each amidation. The sequence is that of Cobyric acid synthase from Mycolicibacterium paratuberculosis (strain ATCC BAA-968 / K-10) (Mycobacterium paratuberculosis).